We begin with the raw amino-acid sequence, 1020 residues long: Calcium-transporting ATPase 1 (1020 aa).

Met1 carries the post-translational modification N-acetylmethionine. Residues 1 to 162 (MESYLNENFG…NQFTESPSRG (162 aa)) are Stromal-facing. The segment at 21–32 (ALQRWRKLCWIV) is interaction with calmodulin. Ser46 bears the Phosphoserine; by CPK mark. A helical membrane pass occupies residues 163 to 183 (FWLFVWEALQDTTLMILAACA). At 184-201 (FVSLIVGILMEGWPIGAH) the chain is on the lumenal side. Residues 202-222 (DGLGIVASILLVVFVTATSDY) form a helical membrane-spanning segment. Topologically, residues 223–350 (RQSLQFKDLD…DDETPLQVKL (128 aa)) are stromal. The helical transmembrane segment at 351-370 (NGVATIIGKIGLFFAVITFA) threads the bilayer. Over 371 to 400 (VLVQGLANQKRLDNSHWIWTADELMAMLEY) the chain is Lumenal. The chain crosses the membrane as a helical span at residues 401–418 (FAVAVTIVVVAVPEGLPL). Topologically, residues 419-813 (AVTLSLAFAM…KWGRSVYINI (395 aa)) are stromal. Asp456 serves as the catalytic 4-aspartylphosphate intermediate. Mg(2+) contacts are provided by Asp758 and Asp762. The chain crosses the membrane as a helical span at residues 814–832 (QKFVQFQLTVNVVALIVNF). Over 833–843 (LSACLTGNAPL) the chain is Lumenal. Residues 844–864 (TAVQLLWVNMIMDTLGALALA) form a helical membrane-spanning segment. The Stromal portion of the chain corresponds to 865–884 (TEPPQDDLMKRSPVGRKGNF). A helical membrane pass occupies residues 885-907 (ISNVMWRNILGQSLYQLVIIWCL). The Lumenal segment spans residues 908-919 (QTKGKTMFGLDG). A helical transmembrane segment spans residues 920–941 (PDSDLTLNTLIFNIFVFCQVFN). Residues 942 to 959 (EISSREMEKIDVFKGILK) lie on the Stromal side of the membrane. A helical membrane pass occupies residues 960 to 981 (NYVFVAVLTCTVVFQVIIIELL). The Lumenal segment spans residues 982–991 (GTFADTTPLN). Residues 992-1013 (LGQWLVSIILGFLGMPVAAALK) form a helical membrane-spanning segment. The Stromal portion of the chain corresponds to 1014–1020 (MIPVGSH).

Belongs to the cation transport ATPase (P-type) (TC 3.A.3) family. Type IIB subfamily. Expressed at higher levels in roots than in leaves.

It localises to the plastid. The protein localises to the chloroplast inner membrane. It catalyses the reaction Ca(2+)(in) + ATP + H2O = Ca(2+)(out) + ADP + phosphate + H(+). With respect to regulation, activated by calmodulin. This magnesium-dependent enzyme catalyzes the hydrolysis of ATP coupled with the translocation of calcium from the cytosol out of the cell or into organelles. The polypeptide is Calcium-transporting ATPase 1 (ACA1) (Arabidopsis thaliana (Mouse-ear cress)).